The primary structure comprises 174 residues: Balbiani ring protein 1 (174 aa).

The interval 28 to 174 (KCRCTSAGKP…RPEGCGSAMR (147 aa)) is disordered. Repeat copies occupy residues 42 to 52 (EPSKGSKPRPE), 53 to 63 (KPSKGSKPRPE), 64 to 74 (KPSKGSKPKPE), 75 to 85 (KPSKGSKPRPE), 124 to 134 (EPSKGSKPRPE), 135 to 145 (KPSKESKPRPE), 146 to 156 (KPSKGSKPRPE), and 157 to 167 (KPSKGSKPRPE). 2 4 X 11 AA tandem repeats regions span residues 42–85 (EPSK…PRPE) and 124–167 (EPSK…PRPE). Composition is skewed to basic and acidic residues over residues 49 to 100 (PRPE…EKCA) and 121 to 159 (RKSE…EKPS).

In terms of tissue distribution, salivary gland.

Its subcellular location is the secreted. Used by the larvae to construct a supramolecular structure, the larval tube. This Chironomus tentans (Midge) protein is Balbiani ring protein 1 (BR1).